Reading from the N-terminus, the 475-residue chain is MSKEIKAQVVVLGSGPAGYSAAFRCADLGLETVLVERYSTLGGVCLNVGCIPSKALLHVSKVIEEAKAMADHGVVFGEPQTDINKIRIWKEKVVNQLTGGLSGMAKMRNVTVVNGYGKFTGPNSILVEGEGESTVVNFDNAIVAAGSRPIKLPFIPHEDPRIWDSTDALELKEVPEKLLIMGGGIIGLEMGTVYHSLGSKVEVVEMFDQVIPAADKDIVKVYTKRIKDKFKLMLETKVTAVEAKEDGIYVSMEGKKAPAEAERYDAVLVAIGRVPNGKLIDGEKAGLEIDERGFINVDKQMRTNVPHIFAIGDIVGQPMLAHKGVHEGHVAAEVISGKKHYFDPKVIPSIAYTEPEVAWVGKTEKEAKAEGIKYEVATFPWAASGRAIASDCSDGMTKLIFDKETHRVIGGAIVGTNGGELLGEIGLAIEMGCDAEDIALTIHAHPTLHESVGLAAEVFEGSITDLPNKKAVKKK.

Residues 36–45 (ERYSTLGGVC), Lys-54, and Gly-117 contribute to the FAD site. Cys-45 and Cys-50 are disulfide-bonded. NAD(+) contacts are provided by residues 182–186 (GGGII), Glu-205, Val-238, and 270–273 (AIGR). Positions 313 and 321 each coordinate FAD. Catalysis depends on His-445, which acts as the Proton acceptor.

This sequence belongs to the class-I pyridine nucleotide-disulfide oxidoreductase family. Requires FAD as cofactor.

The protein resides in the cytoplasm. It carries out the reaction N(6)-[(R)-dihydrolipoyl]-L-lysyl-[protein] + NAD(+) = N(6)-[(R)-lipoyl]-L-lysyl-[protein] + NADH + H(+). Functionally, the branched-chain alpha-keto dehydrogenase complex catalyzes the overall conversion of alpha-keto acids to acyl-CoA and CO(2). It contains multiple copies of 3 enzymatic components: branched-chain alpha-keto acid decarboxylase (E1), lipoamide acyltransferase (E2) and lipoamide dehydrogenase (E3). The chain is Dihydrolipoyl dehydrogenase (lpd) from Vibrio parahaemolyticus serotype O3:K6 (strain RIMD 2210633).